Consider the following 955-residue polypeptide: Iron-responsive element-binding protein 2 (955 aa).

Positions 504, 570, and 573 each coordinate [4Fe-4S] cluster.

Belongs to the aconitase/IPM isomerase family. The cofactor is [4Fe-4S] cluster. Ubiquitinated and degraded by the proteasome in presence of high level of iron and oxygen.

The protein localises to the cytoplasm. In terms of biological role, RNA-binding protein that binds to iron-responsive elements (IRES), which are stem-loop structures found in the 5'-UTR of ferritin, and delta aminolevulinic acid synthase mRNAs, and in the 3'-UTR of transferrin receptor mRNA. Binding to the IRE element in ferritin results in the repression of its mRNA translation. Binding of the protein to the transferrin receptor mRNA inhibits the degradation of this otherwise rapidly degraded mRNA. This is Iron-responsive element-binding protein 2 (ireb2) from Xenopus laevis (African clawed frog).